The following is a 222-amino-acid chain: Sororin-like protein (222 aa).

Residues 1 to 189 (MEAPRSVGGR…VKQEKEDPVS (189 aa)) form a disordered region. Positions 24–33 (SRSSQQSSSS) are enriched in low complexity. The segment covering 47–60 (RLVEQTTLKEKPKD) has biased composition (basic and acidic residues). The span at 88–105 (ADLASPASAPSRPQTSRS) shows a compositional bias: low complexity. The Nuclear localization signal motif lies at 155-162 (GKKTRQAS). Over residues 167–179 (KTLKVAPKKRQRT) the composition is skewed to basic residues. Residues 192–214 (CQDYIEKQKAYFAEIDAFELPVE) are C-terminal Sororin domain.

It belongs to the sororin family.

It is found in the nucleus. Its function is as follows. Regulator of sister chromatid cohesion in mitosis stabilizing cohesin complex association with chromatin. Antagonizes the action of WAPL proteins (WAPL1 and WAPL2) which stimulates cohesin dissociation from chromatin, particularly during somatic division in root cells and meiocytes during anaphase I. Required for centromeric sister chromatid cohesion during male meiosis (microsporogenesis). Cohesion ensures that chromosome partitioning is accurate in dividing cells and may play an important role in DNA repair. The chain is Sororin-like protein from Arabidopsis thaliana (Mouse-ear cress).